The following is an 89-amino-acid chain: Small ribosomal subunit protein uS15 (89 aa).

The protein belongs to the universal ribosomal protein uS15 family. Part of the 30S ribosomal subunit. Forms a bridge to the 50S subunit in the 70S ribosome, contacting the 23S rRNA.

Functionally, one of the primary rRNA binding proteins, it binds directly to 16S rRNA where it helps nucleate assembly of the platform of the 30S subunit by binding and bridging several RNA helices of the 16S rRNA. Its function is as follows. Forms an intersubunit bridge (bridge B4) with the 23S rRNA of the 50S subunit in the ribosome. This chain is Small ribosomal subunit protein uS15, found in Lysinibacillus sphaericus (strain C3-41).